Here is a 258-residue protein sequence, read N- to C-terminus: F-box/SPRY domain-containing protein 1 (258 aa).

The 49-residue stretch at 6–54 (MEYAPNIPDNVLELIFSFLKLQDLRNCTLVCKSWYRFFCDENNEVWRAQ) folds into the F-box domain. One can recognise a B30.2/SPRY domain in the interval 64 to 256 (FKNDLLTVVP…ISMVYLGAPL (193 aa)).

This sequence belongs to the FBXO45/Fsn family. Component of an E3 ubiquitin ligase complex composed of hiw and Fsn.

The protein localises to the synapse. The protein operates within protein modification; protein ubiquitination. Its function is as follows. Required in the presynaptic motoneuron to down-regulate the levels of wnd and restrain synaptic terminal growth at the neuromuscular junction (NMJ). This Anopheles gambiae (African malaria mosquito) protein is F-box/SPRY domain-containing protein 1.